Consider the following 288-residue polypeptide: PAK4-inhibitor inka2 (288 aa).

Residues 159–196 form an inka box region; that stretch reads DPTDWTTSLLTRGRNRQPLVLGDNSFADLIKNWMDLPE.

This sequence belongs to the INKA family.

The protein localises to the nucleus. Functionally, inhibitor of the serine/threonine-protein kinase pak4/pak5. Acts by binding pak4/pak5 in a substrate-like manner, inhibiting the protein kinase activity. The polypeptide is PAK4-inhibitor inka2 (Danio rerio (Zebrafish)).